A 513-amino-acid chain; its full sequence is Maturase K (513 aa).

It belongs to the intron maturase 2 family. MatK subfamily.

Its subcellular location is the plastid. The protein localises to the chloroplast. Functionally, usually encoded in the trnK tRNA gene intron. Probably assists in splicing its own and other chloroplast group II introns. The protein is Maturase K of Pinus resinosa (Red pine).